The primary structure comprises 302 residues: Sulfotransferase 1C4 (302 aa).

55-60 serves as a coordination point for 3'-phosphoadenylyl sulfate; that stretch reads KAGTTW. Position 113-115 (113-115) interacts with substrate; sequence KTH. Catalysis depends on His-115, which acts as the Proton acceptor. 3'-phosphoadenylyl sulfate-binding positions include Arg-137, Ser-145, Tyr-200, 234 to 239, and 262 to 266; these read TSFDVM and FMRKG.

The protein belongs to the sulfotransferase 1 family. Expressed in liver, kidney and jejunum.

The protein resides in the cytoplasm. It localises to the cytosol. It catalyses the reaction a phenol + 3'-phosphoadenylyl sulfate = an aryl sulfate + adenosine 3',5'-bisphosphate + H(+). The enzyme catalyses 17beta-estradiol + 3'-phosphoadenylyl sulfate = 17beta-estradiol 3-sulfate + adenosine 3',5'-bisphosphate + H(+). The catalysed reaction is bisphenol A + 3'-phosphoadenylyl sulfate = bisphenyl A sulfate + adenosine 3',5'-bisphosphate + H(+). Functionally, sulfotransferase that utilizes 3'-phospho-5'-adenylyl sulfate (PAPS) as sulfonate donor to catalyze the sulfate conjugation of phenolic compounds and estrogen (E2). Can also sulfonate estrogenic compounds, however, the dietary flavonoids (phytoestrogen) and environmental estrogens, like bisphenol A are better substrates than 17beta-estradiol (E2). The sequence is that of Sulfotransferase 1C4 (SULT1C4) from Macaca fascicularis (Crab-eating macaque).